Consider the following 88-residue polypeptide: Pigment dispersing factor homolog pdf-1 (88 aa).

A signal peptide spans 1–21; the sequence is MNRFIISMIALLAVFCAVSTA.

The protein localises to the secreted. Probable ligand of isoforms a and b of the calcitonin receptor-like protein, pdfr-1, a G-protein coupled receptor. May not signal through isoform c of pdfr-1. Involved in locomotion; more specifically mate searching behavior of males, independent of nutritional status. Involved in regulating the male-specific expression of TGFbeta-like daf-7 in the ASJ chemosensory neurons. Plays a role in circadian rhythms of locomotor activity. Involved in mediating arousal from the sleep-like state called lethargus, which occurs during molting between larval and adult stages, in part by regulating touch sensitivity, and working in concert with neuropeptide flp-2. In the presence of food, plays a role in initiating and extending exploratory roaming behavior, in opposition to 5-hydroxytryptamine (serotonin) signaling. The protein is Pigment dispersing factor homolog pdf-1 of Caenorhabditis elegans.